We begin with the raw amino-acid sequence, 227 residues long: Phosphoribosylformylglycinamidine synthase subunit PurQ (227 aa).

A Glutamine amidotransferase type-1 domain is found at 3 to 225; sequence FAVIVLPGSN…VKNWRDTHVT (223 aa). The active-site Nucleophile is the cysteine 86. Residues histidine 194 and glutamate 196 contribute to the active site.

In terms of assembly, part of the FGAM synthase complex composed of 1 PurL, 1 PurQ and 2 PurS subunits.

The protein localises to the cytoplasm. It carries out the reaction N(2)-formyl-N(1)-(5-phospho-beta-D-ribosyl)glycinamide + L-glutamine + ATP + H2O = 2-formamido-N(1)-(5-O-phospho-beta-D-ribosyl)acetamidine + L-glutamate + ADP + phosphate + H(+). The enzyme catalyses L-glutamine + H2O = L-glutamate + NH4(+). It functions in the pathway purine metabolism; IMP biosynthesis via de novo pathway; 5-amino-1-(5-phospho-D-ribosyl)imidazole from N(2)-formyl-N(1)-(5-phospho-D-ribosyl)glycinamide: step 1/2. Its function is as follows. Part of the phosphoribosylformylglycinamidine synthase complex involved in the purines biosynthetic pathway. Catalyzes the ATP-dependent conversion of formylglycinamide ribonucleotide (FGAR) and glutamine to yield formylglycinamidine ribonucleotide (FGAM) and glutamate. The FGAM synthase complex is composed of three subunits. PurQ produces an ammonia molecule by converting glutamine to glutamate. PurL transfers the ammonia molecule to FGAR to form FGAM in an ATP-dependent manner. PurS interacts with PurQ and PurL and is thought to assist in the transfer of the ammonia molecule from PurQ to PurL. The chain is Phosphoribosylformylglycinamidine synthase subunit PurQ from Bacillus pumilus (strain SAFR-032).